A 912-amino-acid chain; its full sequence is MESLKTDTEMPYPEVIVDVGRVIFGEENRKKMTNSCLKRSENSRIIRAICALLNSGGGVIKAEIDDKTYSYQCHGLGQDLETSFQKLLPSGSQKYLDYMQQGHNLLIFVKSWSPDVFSLPLRICSLRSNLYRRDVTSAINLSASSALELLREKGFRAQRGRPRVKKLHPQQVLNRCIQEEEDMRILASEFFKKDKLMYKEKLNFTESTHVEFKRFTTKKVIPRIKEMLPHYVSAFANTQGGYVLIGVDDKSKEVVGCKWEKVNPDLLKKEIENCIEKLPTFHFCCEKPKVNFTTKILNVYQKDVLDGYVCVIQVEPFCCVVFAEAPDSWIMKDNSVTRLTAEQWVVMMLDTQSAPPSLVTDYNSCLISSASSARKSPGYPIKVHKFKEALQRHLFPVTQEEVQFKPESLCKKLFSDHKELEGLMKTLIHPCSQGIVIFSRSWAGDVGFRKEQNVLCDALLIAVNSPVVLYTILIDPNWPGGLEYARNTAHQLKQKLQTVGGYTGKVCIIPRLIHLSSTQSRPGEIPLRYPRSYRLADEEEMEDLLQALVVVSLSSRSLLSDQMGCEFFNLLIMEQSQLLSESLQKTRELFIYCFPGVRKTALAIKIMEKIKDLFHCKPKEILYVCESDSLKDFVTQQTTCQAVTRKTFMQGEFLKIKHIVMDETENFCSKYGNWYMKAKNITHPKAKGTGSENLHHGILWLFLDPFQIHHADVNGLPPPSAQFPRKTITSGIHCALEIAKVMKEEMKRIKENPPSNMSPDTLALFSETAYEEATCAQALPGVCETKTNLTTEQIANYVARKCHSLFQCGYLPKDIAILCRRGEDRGRYRLALLKAMELIETHRPSEVVFSPATGVWGSHIVLDSIQQFSGLERTVVFGLSPECDQSEEFHKLCFASRAIKHLYLLYEKRAAY.

The required for endoribonuclease activity stretch occupies residues 206-391 (ESTHVEFKRF…KVHKFKEALQ (186 aa)). Residues 392–571 (RHLFPVTQEE…QMGCEFFNLL (180 aa)) form a required for ribosome binding region. Residue 593 to 600 (CFPGVRKT) coordinates ATP.

This sequence belongs to the Schlafen family. Subgroup III subfamily. In terms of assembly, associates with ribosomes in an ATP-independent manner. It depends on Mg(2+) as a cofactor. The cofactor is Mn(2+). Expressed in megakaryocytes and platelets (at protein level). Weakly expressed in melanocytes and malignant melanoma cells.

It localises to the nucleus. Functionally, shows no ribosome-associated and endoribonuclease activities. Its function is as follows. Displays polysome-associated endoribonuclease activity towards mRNAs and rRNAs. May play a role in RNA surveillance pathways by recognizing stalled ribosomes and triggering endonucleolytic cleavage of aberrant mRNAs. Cleaves different types of rRNAs and mRNAs in a magnesium- and manganese-dependent and ATP-independent manner. Involved in correct maturation of megakaryocytes and especially important for proplatelet extension. This Homo sapiens (Human) protein is Protein SLFN14.